Consider the following 253-residue polypeptide: Small ribosomal subunit protein uS3 (253 aa).

In terms of domain architecture, KH type-2 spans 39-107 (VRRALKKRLY…EVHLNIVEIR (69 aa)). A disordered region spans residues 215 to 253 (LDKRLAGESGPAGEGGGRERGDRPDRGPRRERRGEPSNA). Basic and acidic residues predominate over residues 230–253 (GGRERGDRPDRGPRRERRGEPSNA).

Belongs to the universal ribosomal protein uS3 family. Part of the 30S ribosomal subunit. Forms a tight complex with proteins S10 and S14.

Functionally, binds the lower part of the 30S subunit head. Binds mRNA in the 70S ribosome, positioning it for translation. The polypeptide is Small ribosomal subunit protein uS3 (Phenylobacterium zucineum (strain HLK1)).